Here is a 563-residue protein sequence, read N- to C-terminus: Glutamate--tRNA ligase (563 aa).

A disordered region spans residues 61-94 (PEEQQKEVESLGGLEQHTKKEEKPKGLPELKNTE). Positions 76–94 (QHTKKEEKPKGLPELKNTE) are enriched in basic and acidic residues. A 'HIGH' region motif is present at residues 104–114 (PNPSGPLHIGH).

It belongs to the class-I aminoacyl-tRNA synthetase family. Glutamate--tRNA ligase type 2 subfamily.

The protein localises to the cytoplasm. It carries out the reaction tRNA(Glu) + L-glutamate + ATP = L-glutamyl-tRNA(Glu) + AMP + diphosphate. Catalyzes the attachment of glutamate to tRNA(Glu) in a two-step reaction: glutamate is first activated by ATP to form Glu-AMP and then transferred to the acceptor end of tRNA(Glu). The chain is Glutamate--tRNA ligase from Methanosphaera stadtmanae (strain ATCC 43021 / DSM 3091 / JCM 11832 / MCB-3).